We begin with the raw amino-acid sequence, 229 residues long: uncharacterized protein (229 aa).

A run of 7 helical transmembrane segments spans residues 21 to 41 (IYSLVGMGVGLSAFVSYLMLY), 56 to 76 (MIYYGAAIIELILVFVASGAA), 83 to 103 (ALPIFLIYAALNGFTLSFIIV), 109 to 129 (TVFQAFLSSAAVFFAMSIIGV), 141 to 161 (AMFAALIGVVVASLINLFIGS), 162 to 182 (GMMSYVISVISVLIFSGLIAS), and 202 to 222 (WAVAMALSLYLDFINLFISLL).

It belongs to the BI1 family.

It is found in the cell membrane. This is an uncharacterized protein from Streptococcus pyogenes serotype M3 (strain ATCC BAA-595 / MGAS315).